The primary structure comprises 262 residues: L-aspartate dehydrogenase (262 aa).

The NAD(+) site is built by alanine 128 and asparagine 183. Histidine 213 is a catalytic residue.

This sequence belongs to the L-aspartate dehydrogenase family.

It carries out the reaction L-aspartate + NADP(+) + H2O = oxaloacetate + NH4(+) + NADPH + H(+). The enzyme catalyses L-aspartate + NAD(+) + H2O = oxaloacetate + NH4(+) + NADH + H(+). Its pathway is cofactor biosynthesis; NAD(+) biosynthesis; iminoaspartate from L-aspartate (dehydrogenase route): step 1/1. In terms of biological role, specifically catalyzes the NAD or NADP-dependent dehydrogenation of L-aspartate to iminoaspartate. The polypeptide is L-aspartate dehydrogenase (Methanopyrus kandleri (strain AV19 / DSM 6324 / JCM 9639 / NBRC 100938)).